The chain runs to 261 residues: Bcl-2-binding component 3, isoforms 3/4 (261 aa).

Positions 27–261 are disordered; the sequence is QICGPRERHG…ASAGDFLCTM (235 aa). Low complexity predominate over residues 40–50; it reads PGGQLPGARRG. Residues 53-63 show a composition bias toward pro residues; the sequence is PRRPAPLPARP. The segment covering 64-73 has biased composition (low complexity); sequence PGALGSVLRP. Composition is skewed to basic residues over residues 74 to 87 and 95 to 106; these read LRARPGCRPRRPHP and RPHRPTRRHRRP. The span at 124-146 shows a compositional bias: low complexity; it reads PGRSSALALAGGAAPGVARAQRP. Residues 147–171 show a composition bias toward gly residues; sequence GGSGGRSHPGGPGSPRGGGTVGPGD. Over residues 172 to 197 the composition is skewed to low complexity; the sequence is RGPAAADGGRPQRTVRAAETRGAAAA.

Does not interact with BCL2.

Functionally, does not affect cell growth. This Homo sapiens (Human) protein is Bcl-2-binding component 3, isoforms 3/4 (BBC3).